We begin with the raw amino-acid sequence, 303 residues long: Pantothenate synthetase (303 aa).

Residue 30–37 (MGYLHAGH) participates in ATP binding. Histidine 37 serves as the catalytic Proton donor. A (R)-pantoate-binding site is contributed by glutamine 61. Glutamine 61 serves as a coordination point for beta-alanine. 147–150 (GAKD) is an ATP binding site. Residue glutamine 153 coordinates (R)-pantoate. Residues valine 176 and 184-187 (LSSR) contribute to the ATP site.

This sequence belongs to the pantothenate synthetase family. Homodimer.

Its subcellular location is the cytoplasm. It carries out the reaction (R)-pantoate + beta-alanine + ATP = (R)-pantothenate + AMP + diphosphate + H(+). The protein operates within cofactor biosynthesis; (R)-pantothenate biosynthesis; (R)-pantothenate from (R)-pantoate and beta-alanine: step 1/1. Catalyzes the condensation of pantoate with beta-alanine in an ATP-dependent reaction via a pantoyl-adenylate intermediate. The chain is Pantothenate synthetase from Rhizobium johnstonii (strain DSM 114642 / LMG 32736 / 3841) (Rhizobium leguminosarum bv. viciae).